We begin with the raw amino-acid sequence, 214 residues long: uncharacterized protein (214 aa).

7 helical membrane passes run 4–23 (VSIV…FSSF), 35–57 (SFVH…LGYY), 67–89 (QWMR…FLFT), 96–118 (VSLV…VHVY), 128–150 (ARVM…VSFS), 155–177 (LPLL…SATV), and 187–209 (TVVY…FFAV).

The protein localises to the cell membrane. This is an uncharacterized protein from Treponema pallidum (strain Nichols).